Here is a 69-residue protein sequence, read N- to C-terminus: Conotoxin reg3.6 (69 aa).

The N-terminal stretch at 1–20 (MMSKLGVLLTICLLLFPLSA) is a signal peptide. A propeptide spanning residues 21–52 (LPLDGDQPADQPAERVQDISPDQNPLFHLVKR) is cleaved from the precursor. Disulfide bonds link cysteine 54–cysteine 68, cysteine 55–cysteine 66, and cysteine 60–cysteine 69.

Belongs to the conotoxin M superfamily. In terms of tissue distribution, expressed by the venom duct.

It is found in the secreted. The sequence is that of Conotoxin reg3.6 from Conus regius (Crown cone).